The primary structure comprises 398 residues: MKKITVLGSTGSIGISTLSIVKNNPSLFKVIVLVANKNSSMMLEQCEYFSPDWAIMKNKKSAHILKKRLKDKKIKTQVLSGNKAICQLAALKESDLVISAIVGMAGLLPTLSAINAGKTILLANKESLIVCGIIFMKALSSNKAKIFPIDSEHNAIFQVLPKFVQKNLGKVNLKKNGVKSIILTASGGPFYNFKRENLSFVTPLEACSHPNWSMGRKISIDSATMINKGFEYAEARLLFNASSSEIDILIHPQSIIHSMVEYIDGTILAQLSVPDMKVAISYAMSWPNRISSGAKFLNFNKLSNLSFFKPDFIQFPCLKLAIDAFSQGQAAMTVLNAVNEVTVSAFLDSKISFNKISEINTDILMSSSFSEPVSVEEVLEIDKKTRIKSQKKISSLIF.

NADPH is bound by residues Thr10, Gly11, Ser12, Ile13, Lys37, Asn38, and Asn124. Lys125 is a binding site for 1-deoxy-D-xylulose 5-phosphate. Glu126 contacts NADPH. Asp150 is a binding site for Mn(2+). 1-deoxy-D-xylulose 5-phosphate-binding residues include Ser151, Glu152, Ser186, and His209. Glu152 is a binding site for Mn(2+). Gly215 lines the NADPH pocket. 1-deoxy-D-xylulose 5-phosphate-binding residues include Ser222, Asn227, Lys228, and Glu231. Glu231 lines the Mn(2+) pocket.

Belongs to the DXR family. Homodimer. Mg(2+) is required as a cofactor. The cofactor is Mn(2+).

The catalysed reaction is 2-C-methyl-D-erythritol 4-phosphate + NADP(+) = 1-deoxy-D-xylulose 5-phosphate + NADPH + H(+). It functions in the pathway isoprenoid biosynthesis; isopentenyl diphosphate biosynthesis via DXP pathway; isopentenyl diphosphate from 1-deoxy-D-xylulose 5-phosphate: step 1/6. Functionally, catalyzes the NADPH-dependent rearrangement and reduction of 1-deoxy-D-xylulose-5-phosphate (DXP) to 2-C-methyl-D-erythritol 4-phosphate (MEP). The chain is 1-deoxy-D-xylulose 5-phosphate reductoisomerase from Buchnera aphidicola subsp. Schizaphis graminum (strain Sg).